The primary structure comprises 101 residues: A-type ATP synthase subunit K (101 aa).

The next 3 membrane-spanning stretches (helical) occupy residues 4 to 24 (ALLI…AAQA), 32 to 52 (FMGI…GAGV), and 75 to 95 (VLIF…FAVL).

Belongs to the V-ATPase proteolipid subunit family. Has multiple subunits with at least A(3), B(3), C, D, E, F, H, I and proteolipid K(x).

Its subcellular location is the cell membrane. Functionally, component of the A-type ATP synthase that produces ATP from ADP in the presence of a proton gradient across the membrane. The chain is A-type ATP synthase subunit K from Sulfolobus acidocaldarius (strain ATCC 33909 / DSM 639 / JCM 8929 / NBRC 15157 / NCIMB 11770).